Consider the following 570-residue polypeptide: Sulfite reductase [NADPH] hemoprotein beta-component (570 aa).

[4Fe-4S] cluster-binding residues include cysteine 434, cysteine 440, cysteine 479, and cysteine 483. Cysteine 483 contributes to the siroheme binding site.

This sequence belongs to the nitrite and sulfite reductase 4Fe-4S domain family. Alpha(8)-beta(8). The alpha component is a flavoprotein, the beta component is a hemoprotein. The cofactor is siroheme. [4Fe-4S] cluster serves as cofactor.

It carries out the reaction hydrogen sulfide + 3 NADP(+) + 3 H2O = sulfite + 3 NADPH + 4 H(+). It participates in sulfur metabolism; hydrogen sulfide biosynthesis; hydrogen sulfide from sulfite (NADPH route): step 1/1. Its function is as follows. Component of the sulfite reductase complex that catalyzes the 6-electron reduction of sulfite to sulfide. This is one of several activities required for the biosynthesis of L-cysteine from sulfate. The chain is Sulfite reductase [NADPH] hemoprotein beta-component from Shigella flexneri serotype 5b (strain 8401).